Consider the following 375-residue polypeptide: Prophage integrase IntE (375 aa).

Positions 82-167 (ITTSTWLDRY…VLIDVFKEAQ (86 aa)) constitute a Core-binding (CB) domain. The region spanning 189-375 (ITRQRLSLEE…RGKGWSKVAL (187 aa)) is the Tyr recombinase domain. Catalysis depends on residues arginine 226, lysine 249, histidine 330, arginine 333, and histidine 353. Residues 350 to 375 (LLGHKTQQQTDRYHDDRGKGWSKVAL) are disordered. Tyrosine 362 serves as the catalytic O-(3'-phospho-DNA)-tyrosine intermediate.

This sequence belongs to the 'phage' integrase family.

Its function is as follows. Integrase from the cryptic lambdoid prophage e14. Integrase is necessary for integration of the phage into the host genome by site-specific recombination. In conjunction with excisionase, integrase is also necessary for excision of the prophage from the host genome. This Escherichia coli (strain K12) protein is Prophage integrase IntE (intE).